Here is a 166-residue protein sequence, read N- to C-terminus: Large ribosomal subunit protein mL49 (166 aa).

The protein belongs to the mitochondrion-specific ribosomal protein mL49 family. As to quaternary structure, component of the mitochondrial ribosome large subunit (39S) which comprises a 16S rRNA and about 50 distinct proteins. Interacts with OXA1L.

It localises to the mitochondrion. The polypeptide is Large ribosomal subunit protein mL49 (MRPL49) (Bos taurus (Bovine)).